Consider the following 572-residue polypeptide: MYRSGERLLGSHALPAEQRDFLPLETTNNNNNHHQPGAWARRAGSSASSPPSASSSPHPSAAVPAADPADSASGSSNKRKRDNKASGGRAAGGGRADGGGVVYSGTPWKRRNYNQGVVGLHEEISDFYEYMSPRPEEEKMRMEVVNRIESVIKELWPSADVQIFGSFKTGLYLPTSDIDLVVFGKWENLPLWTLEEALRKHKVADEDSVKVLDKATVPIIKLTDSFTEVKVDISFNVQNGVRAADLIKDFTKKYPVLPYLVLVLKQFLLQRDLNEVFTGGIGSYSLFLMAVSFLQLHPREDACIPNTNYGVLLIEFFELYGRHFNYLKTGIRIKDGGSYVAKDEVQKNMLDGYRPSMLYIEDPLQPGNDVGRSSYGAMQVKQAFDYAYVVLSHAVSPIAKYYPNNETESILGRIIRVTDEVATYRDWISKQWGLKNRPEPSCNGPVSSSSATQSSSSDVDSDATPCKTPKQLLCRPSTGNRVGSQDVSLESSQAVGKMQSTQTTNTSNSTNKSQHGSARLFRSSSKGFQGTTQTSHGSLMTNKQHQGKSNNQYYHGKKRKHKRDAPLSDLCR.

The interval 1–105 (MYRSGERLLG…ADGGGVVYSG (105 aa)) is disordered. Residues 25 to 34 (ETTNNNNNHH) are compositionally biased toward polar residues. The segment covering 36 to 76 (PGAWARRAGSSASSPPSASSSPHPSAAVPAADPADSASGSS) has biased composition (low complexity). Residues 89-102 (RAAGGGRADGGGVV) are compositionally biased toward gly residues. Valine 151 participates in a covalent cross-link: Glycyl lysine isopeptide (Lys-Gly) (interchain with G-Cter in SUMO2). Mg(2+)-binding residues include aspartate 177 and aspartate 179. Residues glycine 240, lysine 265, serine 283, tyrosine 284, asparagine 368, and arginine 372 each contribute to the ATP site. The PAP-associated domain occupies 308–368 (NYGVLLIEFF…YIEDPLQPGN (61 aa)). Residues 435–572 (KNRPEPSCNG…RDAPLSDLCR (138 aa)) are disordered. Positions 446–464 (VSSSSATQSSSSDVDSDAT) are enriched in low complexity. Lysine 470 is covalently cross-linked (Glycyl lysine isopeptide (Lys-Gly) (interchain with G-Cter in SUMO2)). Polar residues predominate over residues 477 to 494 (STGNRVGSQDVSLESSQA). Serine 484 bears the Phosphoserine mark. Glycyl lysine isopeptide (Lys-Gly) (interchain with G-Cter in SUMO2) cross-links involve residues lysine 497, lysine 512, and lysine 526. Residues 499–514 (QSTQTTNTSNSTNKSQ) show a composition bias toward low complexity. Residues 522 to 553 (RSSSKGFQGTTQTSHGSLMTNKQHQGKSNNQY) show a composition bias toward polar residues. The Basic, involved in binding of the RNA primer signature appears at 557–563 (KKRKHKR).

It belongs to the DNA polymerase type-B-like family. Component of a nucleolar TRAMP-like complex, an ATP-dependent exosome regulatory complex consisting of a helicase (MTREX), an oligadenylate polymerase (TENT4B or TENT4A), and a substrate specific RNA-binding factor (ZCCHC7 or ZCCHC8). Several TRAMP-like complexes exist with specific compositions and are associated with nuclear, or nucleolar RNA exosomes. Interacts with CPEB1; the interaction is required for TENT4B-mediated translational control. The cofactor is Mg(2+). Mn(2+) serves as cofactor.

It localises to the nucleus. It is found in the nucleolus. Its subcellular location is the cytoplasm. It catalyses the reaction RNA(n) + ATP = RNA(n)-3'-adenine ribonucleotide + diphosphate. Functionally, terminal nucleotidyltransferase that catalyzes preferentially the transfer of ATP and GTP on RNA 3' poly(A) tail creating a heterogeneous 3' poly(A) tail leading to mRNAs stabilization by protecting mRNAs from active deadenylation. Also functions as a catalytic subunit of a TRAMP-like complex which has a poly(A) RNA polymerase activity and is involved in a post-transcriptional quality control mechanism. Polyadenylation with short oligo(A) tails is required for the degradative activity of the exosome on several of its nuclear RNA substrates. Doesn't need a cofactor for polyadenylation activity (in vitro). Required for cytoplasmic polyadenylation of mRNAs involved in carbohydrate metabolism, including the glucose transporter SLC2A1/GLUT1. Plays a role in replication-dependent histone mRNA degradation, probably through terminal uridylation of mature histone mRNAs. May play a role in sister chromatid cohesion. Mediates 3' adenylation of the microRNA MIR21 followed by its 3'-to-5' trimming by the exoribonuclease PARN leading to degradation. Mediates 3' adenylation of H/ACA box snoRNAs (small nucleolar RNAs) followed by its 3'-to-5' trimming by the exoribonuclease PARN which enhances snoRNA stability and maturation. The protein is Terminal nucleotidyltransferase 4B of Homo sapiens (Human).